A 270-amino-acid chain; its full sequence is 3-methyl-2-oxobutanoate hydroxymethyltransferase (270 aa).

Residues Asp50 and Asp89 each coordinate Mg(2+). Residues 50-51, Asp89, and Lys118 each bind 3-methyl-2-oxobutanoate; that span reads DS. Glu120 contributes to the Mg(2+) binding site. Glu187 serves as the catalytic Proton acceptor.

The protein belongs to the PanB family. In terms of assembly, homodecamer; pentamer of dimers. It depends on Mg(2+) as a cofactor.

Its subcellular location is the cytoplasm. It catalyses the reaction 3-methyl-2-oxobutanoate + (6R)-5,10-methylene-5,6,7,8-tetrahydrofolate + H2O = 2-dehydropantoate + (6S)-5,6,7,8-tetrahydrofolate. It participates in cofactor biosynthesis; (R)-pantothenate biosynthesis; (R)-pantoate from 3-methyl-2-oxobutanoate: step 1/2. Functionally, catalyzes the reversible reaction in which hydroxymethyl group from 5,10-methylenetetrahydrofolate is transferred onto alpha-ketoisovalerate to form ketopantoate. The chain is 3-methyl-2-oxobutanoate hydroxymethyltransferase from Helicobacter pylori (strain G27).